Reading from the N-terminus, the 73-residue chain is Homeodomain-only protein (73 aa).

The homeobox; degenerate DNA-binding region spans 3 to 62; that stretch reads AEPANGPTEDQVEILEYNFNKVNRHPDPTTLCLIAAEAGLSEEETQKWFKQRLAQWRRSE.

Interacts with serum response factor (SRF). Component of a large complex containing histone deacetylases such as HDAC2. Interacts with the acetylated forms of HSPA1A and HSPA1B. Interacts with HSPA8.

It is found in the nucleus. The protein resides in the cytoplasm. In terms of biological role, atypical homeodomain protein which does not bind DNA and is required to modulate cardiac growth and development. Acts via its interaction with SRF, thereby modulating the expression of SRF-dependent cardiac-specific genes and cardiac development. Prevents SRF-dependent transcription either by inhibiting SRF binding to DNA or by recruiting histone deacetylase (HDAC) proteins that prevent transcription by SRF. Overexpression causes cardiac hypertrophy. Acts as a co-chaperone for HSPA1A and HSPA1B chaperone proteins and assists in chaperone-mediated protein refolding. The sequence is that of Homeodomain-only protein (HOPX) from Sus scrofa (Pig).